A 1044-amino-acid chain; its full sequence is Diacylglycerol lipase-alpha (1044 aa).

At 1-22 (MPGIVVFRRRWSVGSDDLVLPA) the chain is on the cytoplasmic side. Residues 23–43 (IFLFLLHTTWFVILSVVLFGL) form a helical membrane-spanning segment. Topologically, residues 44–60 (VYNPHEACSLNLVDHGR) are extracellular. A helical membrane pass occupies residues 61-81 (GYLGILLSCMIAEMAIIWLSM). At 82-101 (RGGILYTEPRDSMQYVLYVR) the chain is on the cytoplasmic side. A helical membrane pass occupies residues 102–122 (LAILVIEFIYAIVGIVWLTQY). Residues 123–136 (YTSCNDLTAKNVTL) lie on the Extracellular side of the membrane. An N-linked (GlcNAc...) asparagine glycan is attached at N133. A helical membrane pass occupies residues 137-157 (GMVVCNWVVILSVCITVLCVF). The Cytoplasmic segment spans residues 158–1044 (DPTGRTFVKL…KQDDLVISAR (887 aa)). Active-site charge relay system residues include S472 and D524. Residues S728, S730, S733, S744, S784, S786, S808, S810, S835, S849, and S954 each carry the phosphoserine modification. The interval 848-897 (LSKHSQDTQPLEAALGSGGVTPERPPSATIEEEEAAGGSEGGGVAPRGEL) is disordered. Residues 1013–1044 (QECLATDKIRTSTPTGHGASPTKQDDLVISAR) form a disordered region. T1025 bears the Phosphothreonine mark.

It belongs to the AB hydrolase superfamily. Lipase family. In terms of assembly, interacts (via C-terminal) with CAMK2A; leading to the phosphorylation and inhibition of DAGLA enzymatic activity. Interacts (via PPXXF motif) with HOMER1 and HOMER2; this interaction is required for DAGLA membrane localization. Ca(2+) serves as cofactor. Post-translationally, phosphorylated at Ser-784 and Ser-810 by CAMK2A; phosphorylation by CAMK2A inhibits diacylglycerol lipase activity. In terms of tissue distribution, highly expressed by principal cells in the hippocampus. In embryonic brains, it is present in axonal tracts, while in adults it localizes to dendritic fields, correlating with the developmental change in requirement for 2-AG synthesis from the pre- to the postsynaptic compartment. Concentrated in heads of dendritic spines throughout the hippocampal formation. Highly compartmentalized into a wide perisynaptic annulus around the postsynaptic density of axospinous contacts but not intrasynaptically (at protein level).

Its subcellular location is the cell membrane. The protein localises to the cell projection. It localises to the dendritic spine membrane. The protein resides in the postsynaptic density membrane. It is found in the early endosome membrane. It catalyses the reaction a 1,2-diacyl-sn-glycerol + H2O = a 2-acylglycerol + a fatty acid + H(+). It carries out the reaction 1-octadecanoyl-2-(5Z,8Z,11Z,14Z-eicosatetraenoyl)-sn-glycerol + H2O = 2-(5Z,8Z,11Z,14Z-eicosatetraenoyl)-glycerol + octadecanoate + H(+). The enzyme catalyses 1,2-di-(9Z-octadecenoyl)-sn-glycerol + H2O = 2-(9Z-octadecenoyl)-glycerol + (9Z)-octadecenoate + H(+). The catalysed reaction is 1-(9Z-octadecenoyl)-2-(5Z,8Z,11Z,14Z-eicosatetraenoyl)-sn-glycerol + H2O = 2-(5Z,8Z,11Z,14Z-eicosatetraenoyl)-glycerol + (9Z)-octadecenoate + H(+). It catalyses the reaction 1-(9Z-octadecenoyl)-2-octadecanoyl-sn-glycerol + H2O = 2-octadecanoylglycerol + (9Z)-octadecenoate + H(+). It carries out the reaction 1-(9Z-octadecenoyl)-2-(9Z,12Z-octadecadienoyl)-sn-glycerol + H2O = 2-(9Z,12Z-octadecadienoyl)-glycerol + (9Z)-octadecenoate + H(+). The enzyme catalyses 1-(9Z-octadecenoyl)-2-O-(5Z,8Z,11Z,14Z-eicosatetraenyl)-sn-glycerol + H2O = 2-O-(5Z,8Z,11Z,14Z)-eicosatetraenylglycerol + (9Z)-octadecenoate + H(+). With respect to regulation, inhibited by 1,2,3-triazole urea covalent inhibitor KT172, DH376 and DO34. Inhibited by p-hydroxy-mercuri-benzoate and HgCl(2), but not to PMSF. Also inhibited by RHC80267. Diacylglycerol lipase activity is inhibited by the phosphorylation of Ser-784 and Ser-810 by CAMK2A. In terms of biological role, serine hydrolase that hydrolyzes arachidonic acid-esterified diacylglycerols (DAGs) to produce the principal endocannabinoid (eCB), 2-arachidonoylglycerol (2-AG). Preferentially hydrolyzes sn-1 fatty acids from diacylglycerols (DAG) that contain arachidonic acid (AA) esterified at the sn-2 position to biosynthesize 2-AG. Has negligible activity against other lipids including monoacylglycerols and phospholipids. Plays a key role in regulating 2-AG signaling in the central nervous system (CNS). Controls the activity of 2-AG as a retrograde messenger at neuronal synapses. Supports axonal growth during development and adult neurogenesis. Plays a role for eCB signaling in the physiological regulation of anxiety and depressive behaviors. Also regulates neuroinflammatory responses in the brain, in particular, LPS-induced microglial activation. This is Diacylglycerol lipase-alpha (Dagla) from Mus musculus (Mouse).